Consider the following 565-residue polypeptide: Protein unc-87 (565 aa).

Positions 1–27 are enriched in low complexity; sequence MLSFNNTTSASSFQSASSRYLMSSSSS. 2 disordered regions span residues 1 to 83 and 237 to 262; these read MLSF…TTNS and IPSQAGWNKGDSQKLMTNFGTPRNTN. Basic and acidic residues predominate over residues 54-69; it reads EALERLRPNTASRERN. 3 Calponin-like repeats span residues 237 to 262, 285 to 310, and 338 to 363; these read IPSQAGWNKGDSQKLMTNFGTPRNTN, VRLQSGTNKYCSQRGMTGFGSGRDVC, and VRLQAGTNKYDSQKGMTGFGTGRRET. Over residues 250–262 the composition is skewed to polar residues; sequence KLMTNFGTPRNTN. Basic and acidic residues predominate over residues 369-381; that stretch reads SKHPEYDHEKPDQ. The interval 369 to 400 is disordered; sequence SKHPEYDHEKPDQSEIPLQSGTNKFASQKGMT. Residues 384–398 show a composition bias toward polar residues; the sequence is IPLQSGTNKFASQKG. 4 Calponin-like repeats span residues 384 to 409, 431 to 456, 472 to 497, and 517 to 542; these read IPLQSGTNKFASQKGMTGFGTARRET, IPSQMGSNQYASQKGMTGFGQPRWEV, VRLQSGTNRFASQAGMIGFGTCRNTT, and IPSQAGWNKGDSQKKMTSFGAPRDVK.

This sequence belongs to the calponin family. Monomer. Interacts with F-actin. Interacts with myosin. Expressed in the body wall muscles. Isoform a: Expression in the pharynx, anal depressor muscle, uterine muscle, vulva and unidentified neurons in the head and the ventral region. Isoform b: Expression in the body wall muscles, spermatheca, vulva and in the myoepithelial sheath.

The protein localises to the cytoplasm. The protein resides in the myofibril. It is found in the sarcomere. It localises to the i band. Its function is as follows. Thin filament-associated protein that is implicated in actin bundling and actin filament dynamics. Exhibits F-actin cross-linking activity. Required for the maintenance of sarcomeric actin organization in striated muscles. Competes with unc-60 isoform b for actin binding and protects actin filaments from depolymerization by unc-60, thereby contributing to actin filament stability. Cooperates with myosin to form actomyosin bundles and inhibits actomyosin ATPase activity and actomyosin motility. Might protect the myofilaments from mechanical stress. Functionally, acts as a negative regulator of myosin-dependent contractility of smooth muscle-like cells in the somatic gonad. The protein is Protein unc-87 (unc-87) of Caenorhabditis elegans.